Here is a 61-residue protein sequence, read N- to C-terminus: Insect toxin BsIT3 (61 aa).

An LCN-type CS-alpha/beta domain is found at 1 to 61 (DGYILNSKGC…RWTSSKNKCN (61 aa)). 4 cysteine pairs are disulfide-bonded: Cys-10/Cys-60, Cys-14/Cys-35, Cys-21/Cys-42, and Cys-25/Cys-44.

This sequence belongs to the long (4 C-C) scorpion toxin superfamily. Sodium channel inhibitor family. Beta subfamily. In terms of tissue distribution, expressed by the venom gland.

The protein resides in the secreted. Its function is as follows. Depressant insect beta-toxins cause a transient contraction paralysis followed by a slow flaccid paralysis. They bind voltage-independently at site-4 of sodium channels (Nav) and shift the voltage of activation toward more negative potentials thereby affecting sodium channel activation and promoting spontaneous and repetitive firing. This toxin is active only on insects. In Hottentotta tamulus sindicus (Scorpion), this protein is Insect toxin BsIT3.